The following is a 210-amino-acid chain: Ras-related protein Rab-43 (210 aa).

23-30 (GDASVGKT) serves as a coordination point for GTP. The Effector region signature appears at 45–53 (QGSTIGVDF). A Phosphoserine modification is found at serine 47. 71 to 75 (DTAGQ) provides a ligand contact to GTP. At threonine 80 the chain carries Phosphothreonine. GTP-binding positions include 129–132 (NKSD) and 161–162 (AK). S-geranylgeranyl cysteine attachment occurs at residues cysteine 208 and cysteine 210. A Cysteine methyl ester modification is found at cysteine 210.

It belongs to the small GTPase superfamily. Rab family. As to quaternary structure, interacts with GDI1, GDI2 and CHM; phosphorylation at Thr-80 disrupts these interactions.

It is found in the cytoplasmic vesicle. The protein resides in the phagosome. Its subcellular location is the phagosome membrane. The protein localises to the golgi apparatus. It localises to the trans-Golgi network membrane. It is found in the trans-Golgi network. Its function is as follows. The small GTPases Rab are key regulators of intracellular membrane trafficking, from the formation of transport vesicles to their fusion with membranes. Rabs cycle between an inactive GDP-bound form and an active GTP-bound form that is able to recruit to membranes different set of downstream effectors directly responsible for vesicle formation, movement, tethering and fusion. The low intrinsic GTPase activity of RAB43 is activated by USP6NL. Involved in retrograde transport from the endocytic pathway to the Golgi apparatus. Involved in the transport of Shiga toxin from early and recycling endosomes to the trans-Golgi network. Required for the structural integrity of the Golgi complex. Plays a role in the maturation of phagosomes that engulf pathogens, such as S.aureus and Mycobacterium. This Rattus norvegicus (Rat) protein is Ras-related protein Rab-43 (Rab43).